The chain runs to 570 residues: Proline--tRNA ligase (570 aa).

The protein belongs to the class-II aminoacyl-tRNA synthetase family. ProS type 1 subfamily. Homodimer.

Its subcellular location is the cytoplasm. It catalyses the reaction tRNA(Pro) + L-proline + ATP = L-prolyl-tRNA(Pro) + AMP + diphosphate. Functionally, catalyzes the attachment of proline to tRNA(Pro) in a two-step reaction: proline is first activated by ATP to form Pro-AMP and then transferred to the acceptor end of tRNA(Pro). As ProRS can inadvertently accommodate and process non-cognate amino acids such as alanine and cysteine, to avoid such errors it has two additional distinct editing activities against alanine. One activity is designated as 'pretransfer' editing and involves the tRNA(Pro)-independent hydrolysis of activated Ala-AMP. The other activity is designated 'posttransfer' editing and involves deacylation of mischarged Ala-tRNA(Pro). The misacylated Cys-tRNA(Pro) is not edited by ProRS. The polypeptide is Proline--tRNA ligase (Neisseria meningitidis serogroup B (strain ATCC BAA-335 / MC58)).